We begin with the raw amino-acid sequence, 261 residues long: Zinc import ATP-binding protein ZnuC (261 aa).

The ABC transporter domain maps to 5 to 220; it reads ISLKALSVTF…PSYIALFGSA (216 aa). An ATP-binding site is contributed by 37–44; sequence GPNGAGKS. The interval 236 to 261 is disordered; it reads HHDLAGQPVSGDATQCNHHHHGHHHD. The span at 252–261 shows a compositional bias: basic residues; it reads NHHHHGHHHD.

This sequence belongs to the ABC transporter superfamily. Zinc importer (TC 3.A.1.15.5) family. In terms of assembly, the complex is composed of two ATP-binding proteins (ZnuC), two transmembrane proteins (ZnuB) and a solute-binding protein (ZnuA).

The protein localises to the cell inner membrane. The catalysed reaction is Zn(2+)(out) + ATP(in) + H2O(in) = Zn(2+)(in) + ADP(in) + phosphate(in) + H(+)(in). In terms of biological role, part of the ABC transporter complex ZnuABC involved in zinc import. Responsible for energy coupling to the transport system. The chain is Zinc import ATP-binding protein ZnuC from Vibrio vulnificus (strain CMCP6).